We begin with the raw amino-acid sequence, 197 residues long: UPF0314 protein R03235 (197 aa).

Helical transmembrane passes span 16–36 (ALWLLACLGVLAIQVLVQHLM) and 152–172 (LPVAATVAIAIVLELFTGYMV).

It belongs to the UPF0314 family.

The protein resides in the cell membrane. This Rhizobium meliloti (strain 1021) (Ensifer meliloti) protein is UPF0314 protein R03235.